Here is a 160-residue protein sequence, read N- to C-terminus: MPLRPCRHHQGFLPKKQWRAKFPQLIVLMGRVAAEELLPAVAVAAVVVAVVVAVERVVPLLFVHRPDSFFLIFFFQSCFVCCCCCCSCSTSLKAYSSEKEKQKYGKRGNGNTPLVQRLVTLSYLALLILVLSIELLTWFVKKQRTGNKKQKDKEKNALLL.

Residues 1-33 (MPLRPCRHHQGFLPKKQWRAKFPQLIVLMGRVA) lie on the Extracellular side of the membrane. A helical membrane pass occupies residues 34 to 54 (AEELLPAVAVAAVVVAVVVAV). Residues 55-68 (ERVVPLLFVHRPDS) lie on the Cytoplasmic side of the membrane. A helical membrane pass occupies residues 69-89 (FFLIFFFQSCFVCCCCCCSCS). Residues 90 to 119 (TSLKAYSSEKEKQKYGKRGNGNTPLVQRLV) are Extracellular-facing. Residues 120 to 140 (TLSYLALLILVLSIELLTWFV) form a helical membrane-spanning segment. Residues 141-160 (KKQRTGNKKQKDKEKNALLL) are Cytoplasmic-facing.

The protein localises to the membrane. This is an uncharacterized protein from Saccharomyces cerevisiae (strain ATCC 204508 / S288c) (Baker's yeast).